We begin with the raw amino-acid sequence, 333 residues long: Tetraacyldisaccharide 4'-kinase (333 aa).

Residue 55-62 coordinates ATP; sequence SVGGNGKT.

Belongs to the LpxK family.

The enzyme catalyses a lipid A disaccharide + ATP = a lipid IVA + ADP + H(+). It functions in the pathway glycolipid biosynthesis; lipid IV(A) biosynthesis; lipid IV(A) from (3R)-3-hydroxytetradecanoyl-[acyl-carrier-protein] and UDP-N-acetyl-alpha-D-glucosamine: step 6/6. Functionally, transfers the gamma-phosphate of ATP to the 4'-position of a tetraacyldisaccharide 1-phosphate intermediate (termed DS-1-P) to form tetraacyldisaccharide 1,4'-bis-phosphate (lipid IVA). In Aeromonas hydrophila subsp. hydrophila (strain ATCC 7966 / DSM 30187 / BCRC 13018 / CCUG 14551 / JCM 1027 / KCTC 2358 / NCIMB 9240 / NCTC 8049), this protein is Tetraacyldisaccharide 4'-kinase.